An 81-amino-acid polypeptide reads, in one-letter code: Large ribosomal subunit protein bL31B (81 aa).

Belongs to the bacterial ribosomal protein bL31 family. Type B subfamily. In terms of assembly, part of the 50S ribosomal subunit.

The protein is Large ribosomal subunit protein bL31B of Borreliella burgdorferi (strain ZS7) (Borrelia burgdorferi).